A 236-amino-acid chain; its full sequence is 1-(5-phosphoribosyl)-5-[(5-phosphoribosylamino)methylideneamino] imidazole-4-carboxamide isomerase (236 aa).

Residue Asp8 is the Proton acceptor of the active site. Asp127 serves as the catalytic Proton donor.

Belongs to the HisA/HisF family.

The protein resides in the cytoplasm. It catalyses the reaction 1-(5-phospho-beta-D-ribosyl)-5-[(5-phospho-beta-D-ribosylamino)methylideneamino]imidazole-4-carboxamide = 5-[(5-phospho-1-deoxy-D-ribulos-1-ylimino)methylamino]-1-(5-phospho-beta-D-ribosyl)imidazole-4-carboxamide. Its pathway is amino-acid biosynthesis; L-histidine biosynthesis; L-histidine from 5-phospho-alpha-D-ribose 1-diphosphate: step 4/9. The polypeptide is 1-(5-phosphoribosyl)-5-[(5-phosphoribosylamino)methylideneamino] imidazole-4-carboxamide isomerase (Campylobacter concisus (strain 13826)).